The following is a 624-amino-acid chain: uncharacterized protein (624 aa).

The segment at 108 to 138 is disordered; sequence PTAWSGMESDSTASERSLPQRTDTTSVSSQY. Ser-112 is subject to Phosphoserine. Over residues 115 to 138 the composition is skewed to polar residues; it reads ESDSTASERSLPQRTDTTSVSSQY. Ser-205 carries the phosphoserine modification. Disordered stretches follow at residues 217–236 and 305–329; these read LMES…PGTR and KREC…PVSE.

This is an uncharacterized protein from Rattus norvegicus (Rat).